The following is a 417-amino-acid chain: Phosphoglycerate kinase (417 aa).

Val23, Asp24, Phe25, Asn26, Gln38, Arg39, Ser62, His63, Gly65, Arg66, Leu121, Arg122, His169, and Arg170 together coordinate (2R)-3-phosphoglycerate. Gly213 is an ADP binding site. CDP is bound at residue Gly213. Ala214 and Lys215 together coordinate AMP. Ala214 is a binding site for ATP. Ala214 contacts Mg(2+). Residue Asp218 participates in CDP binding. Asp218 is a binding site for Mg(2+). Lys219 provides a ligand contact to AMP. Lys219 provides a ligand contact to ATP. Residue Gly237 participates in ADP binding. Gly237 serves as a coordination point for CDP. AMP is bound by residues Gly238 and Gly312. ATP contacts are provided by Gly238 and Gly312. Residues Gly337 and Phe342 each contribute to the CDP site. Phe342 serves as a coordination point for ADP. AMP is bound at residue Glu343. 3 residues coordinate ATP: Glu343, Asp374, and Thr375. Asp374 provides a ligand contact to Mg(2+).

Belongs to the phosphoglycerate kinase family. Monomer. Mg(2+) serves as cofactor.

The protein localises to the cytoplasm. It is found in the secreted. It localises to the cell wall. Its subcellular location is the mitochondrion. The catalysed reaction is (2R)-3-phosphoglycerate + ATP = (2R)-3-phospho-glyceroyl phosphate + ADP. Its pathway is carbohydrate degradation; glycolysis; pyruvate from D-glyceraldehyde 3-phosphate: step 2/5. Functionally, catalyzes one of the two ATP producing reactions in the glycolytic pathway via the reversible conversion of 1,3-diphosphoglycerate to 3-phosphoglycerate. Both L- and D- forms of purine and pyrimidine nucleotides can be used as substrates, but the activity is much lower on pyrimidines. Negatively regulates the biosynthesis of acetyl-CoA from pyruvate in the mitochondrion. In Candida albicans (strain SC5314 / ATCC MYA-2876) (Yeast), this protein is Phosphoglycerate kinase (PGK1).